A 463-amino-acid chain; its full sequence is tRNA-splicing endonuclease subunit Sen2 (463 aa).

Serine 32 and serine 147 each carry phosphoserine. Positions 120-213 (HDESTVQKIL…VASPSSLNGH (94 aa)) are disordered. Basic and acidic residues-rich tracts occupy residues 139-149 (PYRERKGESPQ) and 159-170 (SSLEGREGKDEL). Catalysis depends on residues tyrosine 367 and histidine 375. Serine 406, serine 409, and serine 413 each carry phosphoserine. Lysine 414 is an active-site residue.

It belongs to the tRNA-intron endonuclease family. TRNA splicing endonuclease is a heterotetramer composed of TSEN2, TSEN15, TSEN34/LENG5 and TSEN54. tRNA splicing endonuclease complex also contains proteins of the pre-mRNA 3'-end processing machinery such as CLP1, CPSF1, CPSF4 and CSTF2.

It localises to the nucleus. Its subcellular location is the nucleolus. The enzyme catalyses pretRNA = a 3'-half-tRNA molecule with a 5'-OH end + a 5'-half-tRNA molecule with a 2',3'-cyclic phosphate end + an intron with a 2',3'-cyclic phosphate and a 5'-hydroxyl terminus.. Constitutes one of the two catalytic subunit of the tRNA-splicing endonuclease complex, a complex responsible for identification and cleavage of the splice sites in pre-tRNA. It cleaves pre-tRNA at the 5'- and 3'-splice sites to release the intron. The products are an intron and two tRNA half-molecules bearing 2',3'-cyclic phosphate and 5'-OH termini. There are no conserved sequences at the splice sites, but the intron is invariably located at the same site in the gene, placing the splice sites an invariant distance from the constant structural features of the tRNA body. Probably carries the active site for 5'-splice site cleavage. The tRNA splicing endonuclease is also involved in mRNA processing via its association with pre-mRNA 3'-end processing factors, establishing a link between pre-tRNA splicing and pre-mRNA 3'-end formation, suggesting that the endonuclease subunits function in multiple RNA-processing events. In Rattus norvegicus (Rat), this protein is tRNA-splicing endonuclease subunit Sen2 (Tsen2).